Reading from the N-terminus, the 267-residue chain is 3-methyl-2-oxobutanoate hydroxymethyltransferase (267 aa).

Residues Asp42 and Asp86 each contribute to the Mg(2+) site. Residues 42-43, Asp86, and Lys116 contribute to the 3-methyl-2-oxobutanoate site; that span reads DS. Residue Glu118 coordinates Mg(2+). Residue Glu185 is the Proton acceptor of the active site.

The protein belongs to the PanB family. As to quaternary structure, homodecamer; pentamer of dimers. Requires Mg(2+) as cofactor.

The protein localises to the cytoplasm. It carries out the reaction 3-methyl-2-oxobutanoate + (6R)-5,10-methylene-5,6,7,8-tetrahydrofolate + H2O = 2-dehydropantoate + (6S)-5,6,7,8-tetrahydrofolate. It functions in the pathway cofactor biosynthesis; (R)-pantothenate biosynthesis; (R)-pantoate from 3-methyl-2-oxobutanoate: step 1/2. Its function is as follows. Catalyzes the reversible reaction in which hydroxymethyl group from 5,10-methylenetetrahydrofolate is transferred onto alpha-ketoisovalerate to form ketopantoate. The polypeptide is 3-methyl-2-oxobutanoate hydroxymethyltransferase (Parasynechococcus marenigrum (strain WH8102)).